A 265-amino-acid chain; its full sequence is Phosphatidylglycerol--prolipoprotein diacylglyceryl transferase (265 aa).

7 helical membrane passes run 11 to 31 (AVSIGPLQFRWYGLMYLFGFI), 56 to 76 (MVTWAIFGVVLGGRLGYILFY), 91 to 111 (IWHGGMSFHGGLLGVLFAVWL), 120 to 140 (FLSVVDFVAPLIPPGLFFGRI), 173 to 193 (QLYEAVLEGVVLFAAVWWFSG), 198 to 218 (VGAVSGLFGVLYAIFRFAVEF), and 233 to 253 (WLTMGQVLCLPLFGVGMWLLL). R139 provides a ligand contact to a 1,2-diacyl-sn-glycero-3-phospho-(1'-sn-glycerol).

It belongs to the Lgt family.

It localises to the cell inner membrane. The catalysed reaction is L-cysteinyl-[prolipoprotein] + a 1,2-diacyl-sn-glycero-3-phospho-(1'-sn-glycerol) = an S-1,2-diacyl-sn-glyceryl-L-cysteinyl-[prolipoprotein] + sn-glycerol 1-phosphate + H(+). Its pathway is protein modification; lipoprotein biosynthesis (diacylglyceryl transfer). Catalyzes the transfer of the diacylglyceryl group from phosphatidylglycerol to the sulfhydryl group of the N-terminal cysteine of a prolipoprotein, the first step in the formation of mature lipoproteins. This Nitratidesulfovibrio vulgaris (strain DSM 19637 / Miyazaki F) (Desulfovibrio vulgaris) protein is Phosphatidylglycerol--prolipoprotein diacylglyceryl transferase.